A 770-amino-acid chain; its full sequence is MPASAARPRPGPGQPTASPFPLLLLAVLSGPVSGRVPRSVPRTSLPISEADSCLTRFAVPHTYNYSVLLVDPASHTLYVGARDTIFALSLPFSGERPRRIDWMVPEAHRQNCRKKGKKEDECHNFVQILAIANASHLLTCGTFAFDPKCGVIDVSRFQQVERLESGRGKCPFEPAQRSAAVMAGGVLYAATVKNYLGTEPIITRAVGRAEDWIRTDTLPSWLNAPAFVAAVALSPAEWGDEDGDDEIYFFFTETSRAFDSYERIKVPRVARVCAGDLGGRKTLQQRWTTFLKADLLCPGPEHGRASSVLQDVAVLRPELGAGTPIFYGIFSSQWEGATISAVCAFRPQDIRTVLNGPFRELKHDCNRGLPVVDNDVPQPRPGECITNNMKLRHFGSSLSLPDRVLTFIRDHPLMDRPVFPADGHPLLVTTDTAYLRVVAHRVTSLSGKEYDVLYLGTEDGHLHRAVRIGAQLSVLEDLALFPEPQPVENMKLYHSWLLVGSRTEVTQVNTTNCGRLQSCSECILAQDPVCAWSFRLDECVAHAGEHRGLVQDIESADVSSLCPKEPGERPVVFEVPVATAAHVVLPCSPSSAWASCVWHQPSGVTALTPRRDGLEVVVTPGAMGAYACECQEGGAAHVVAAYSLVWGSQRDAPSRAHTVGAGLAGFFLGILAASLTLILIGRRQQRRRQRELLARDKVGLDLGAPPSGTTSYSQDPPSPSPEDERLPLALAKRGSGFGGFSPPFLLDPCPSPAHIRLTGAPLATCDETSI.

The first 34 residues, 1 to 34 (MPASAARPRPGPGQPTASPFPLLLLAVLSGPVSG), serve as a signal peptide directing secretion. Residues 35–659 (RVPRSVPRTS…RDAPSRAHTV (625 aa)) lie on the Extracellular side of the membrane. Residues 42–510 (RTSLPISEAD…SRTEVTQVNT (469 aa)) form the Sema domain. The N-linked (GlcNAc...) asparagine glycan is linked to Asn64. A disulfide bond links Cys112 and Cys122. The N-linked (GlcNAc...) asparagine glycan is linked to Asn133. Cystine bridges form between Cys140/Cys149, Cys273/Cys384, and Cys297/Cys343. The N-linked (GlcNAc...) asparagine glycan is linked to Asn509. The PSI domain maps to 512 to 563 (NCGRLQSCSECILAQDPVCAWSFRLDECVAHAGEHRGLVQDIESADVSSLCP). Disulfide bonds link Cys513-Cys530, Cys522-Cys539, and Cys587-Cys628. The Ig-like C2-type domain maps to 580-635 (AAHVVLPCSPSSAWASCVWHQPSGVTALTPRRDGLEVVVTPGAMGAYACECQEGGA). The helical transmembrane segment at 660–680 (GAGLAGFFLGILAASLTLILI) threads the bilayer. Residues 681-770 (GRRQQRRRQR…PLATCDETSI (90 aa)) are Cytoplasmic-facing. A disordered region spans residues 696–725 (DKVGLDLGAPPSGTTSYSQDPPSPSPEDER). Phosphoserine occurs at positions 718 and 720. The short motif at 768–770 (TSI) is the PDZ-binding element.

This sequence belongs to the semaphorin family. As to quaternary structure, interacts (via PDZ-binding motif) with DLG4/SAP90 (via PDZ domain 2); this interaction may promote translocation of DLG4/SAP90 to the membrane.

The protein resides in the cell membrane. It is found in the postsynaptic density. It localises to the perikaryon. The protein localises to the cell projection. Its subcellular location is the dendrite. Functionally, probable cell surface receptor that regulates oligodendroglial precursor cell migration. Might also regulate differentiation of oligodendroglial precursor cells. Has growth cone collapse activity against retinal ganglion-cell axons. This chain is Semaphorin-4F (SEMA4F), found in Homo sapiens (Human).